A 216-amino-acid polypeptide reads, in one-letter code: Somatotropin (216 aa).

Residues Met1 to Ala26 form the signal peptide. His45 lines the Zn(2+) pocket. A disulfide bridge links Cys78 with Cys189. Residue Ser131 is modified to Phosphoserine. Glu198 is a Zn(2+) binding site. The cysteines at positions 206 and 214 are disulfide-linked.

Belongs to the somatotropin/prolactin family.

It is found in the secreted. Its function is as follows. Plays an important role in growth control. Its major role in stimulating body growth is to stimulate the liver and other tissues to secrete IGF1. It stimulates both the differentiation and proliferation of myoblasts. It also stimulates amino acid uptake and protein synthesis in muscle and other tissues. The polypeptide is Somatotropin (GH1) (Neovison vison (American mink)).